Consider the following 334-residue polypeptide: Mevalonate kinase (334 aa).

110–120 (PVGAGLGSSAA) lines the ATP pocket. Catalysis depends on Asp-161, which acts as the Proton acceptor.

The protein belongs to the GHMP kinase family. Mevalonate kinase subfamily. Homodimer. Mg(2+) serves as cofactor.

The protein resides in the cytoplasm. It carries out the reaction (R)-mevalonate + ATP = (R)-5-phosphomevalonate + ADP + H(+). It functions in the pathway isoprenoid biosynthesis; isopentenyl diphosphate biosynthesis via mevalonate pathway; isopentenyl diphosphate from (R)-mevalonate: step 1/3. Functionally, catalyzes the phosphorylation of (R)-mevalonate (MVA) to (R)-mevalonate 5-phosphate (MVAP). Functions in the mevalonate (MVA) pathway leading to isopentenyl diphosphate (IPP), a key precursor for the biosynthesis of isoprenoid compounds such as archaeal membrane lipids. This chain is Mevalonate kinase, found in Pyrococcus furiosus (strain ATCC 43587 / DSM 3638 / JCM 8422 / Vc1).